A 466-amino-acid polypeptide reads, in one-letter code: MEVATDQPRWMTHHAVLNGQHPESHHPGLAHNYMEPAQLLPPDEVDVFFNHLDSQGNPYYANSAHARARVSYSQAHARLTGSQMCRPHLIHSPGIPWLDSSKAALSAHHHNPWTVNPFTKTPLHPSAAGAPGAISVYPGSSTSSTASVSSLTPASHSGSHLFGFPPTPPKEVSPDPNSTSAASPSSSAGARQEDKDSIKYQVSLSEGMKMESASPLRSSLTSMGAQPSTHHPIPTYPSYVPAAHDYSSSLFHPGSFLGGPASSFTPKPRSKARSCSEGRECVNCGATATPLWRRDGTGHYLCNACGLYHKMNGQNRPLIKPKRRLSAARRAGTCCANCQTTTTTLWRRNANGDPVCNACGLYYKLHNVNRPLTMKKEGIQTRNRKMSNKSKKSKKGSECFEELSKCMQEKSSPFSAAALASHMAPMGHLPPFSHSGHILPTPTPIHPSSSISFGHPHPSSMVTAMG.

Low complexity-rich tracts occupy residues 139–155 (GSSTSSTASVSSLTPAS) and 174–188 (PDPNSTSAASPSSSA). The tract at residues 139 to 196 (GSSTSSTASVSSLTPASHSGSHLFGFPPTPPKEVSPDPNSTSAASPSSSAGARQEDKD) is disordered. 2 GATA-type zinc fingers span residues 281-305 (CVNCGATATPLWRRDGTGHYLCNAC) and 335-359 (CANCQTTTTTLWRRNANGDPVCNAC). The interval 436-466 (GHILPTPTPIHPSSSISFGHPHPSSMVTAMG) is disordered.

In terms of tissue distribution, expressed in all developmental stages of erythroid cells but is additionally found in a limited subset of other tissues.

Its subcellular location is the nucleus. In terms of biological role, transcriptional activator which probably serves as a general switch factor for cell-specific development. It binds to DNA sites with the consensus sequence 5'-[AT]GATA[AG]-3' within regulatory regions of genes. The sequence is that of GATA-binding factor 2 (GATA2) from Gallus gallus (Chicken).